Reading from the N-terminus, the 181-residue chain is FMN reductase (NADH) RutF (181 aa).

This sequence belongs to the non-flavoprotein flavin reductase family. RutF subfamily.

The catalysed reaction is FMNH2 + NAD(+) = FMN + NADH + 2 H(+). Its function is as follows. Catalyzes the reduction of FMN to FMNH2 which is used to reduce pyrimidine by RutA via the Rut pathway. In Ancylobacter novellus (strain ATCC 8093 / DSM 506 / JCM 20403 / CCM 1077 / IAM 12100 / NBRC 12443 / NCIMB 10456) (Starkeya novella), this protein is FMN reductase (NADH) RutF.